A 570-amino-acid chain; its full sequence is Adenine deaminase 2 (570 aa).

The protein belongs to the metallo-dependent hydrolases superfamily. Adenine deaminase family. Requires Mn(2+) as cofactor.

It carries out the reaction adenine + H2O + H(+) = hypoxanthine + NH4(+). The chain is Adenine deaminase 2 from Carboxydothermus hydrogenoformans (strain ATCC BAA-161 / DSM 6008 / Z-2901).